Reading from the N-terminus, the 235-residue chain is MSRYGRYGGETKVYVGNLGTGAGKGELERAFSYYGPLRTVWIARNPPGFAFVEFEDPRDAEDAVRGLDGKVICGSRVRVELSTGMPRRSRFDRPPARRPFDPNDRCYECGEKGHYAYDCHRYSRRRRSRSRSRSHSRSRGRRYSRSRSRSRGRRSRSASPRRSRSVSLRRSRSASLRRSRSGSIKGSRSRSRSRSRSRSLSRPRSSRSKSRSPSPKRSRSPSGSPRRSASPERVD.

The 74-residue stretch at 11–84 (TKVYVGNLGT…SRVRVELSTG (74 aa)) folds into the RRM domain. Lys24 is modified (N6-acetyllysine; alternate). Residue Lys24 forms a Glycyl lysine isopeptide (Lys-Gly) (interchain with G-Cter in SUMO2); alternate linkage. Ser32 bears the Phosphoserine mark. Positions 81–98 (LSTGMPRRSRFDRPPARR) are sufficient for interaction with NXF1. The CCHC-type zinc finger occupies 104 to 120 (DRCYECGEKGHYAYDCH). A compositionally biased stretch (basic residues) spans 123 to 180 (SRRRRSRSRSRSHSRSRGRRYSRSRSRSRGRRSRSASPRRSRSVSLRRSRSASLRRSR). The interval 123 to 235 (SRRRRSRSRS…RRSASPERVD (113 aa)) is disordered. Tandem repeats lie at residues 153-160 (RRSRSASP), 161-168 (RRSRSVSL), 169-176 (RRSRSASL), and 177-184 (RRSRSGSI). Positions 153-223 (RRSRSASPRR…SPKRSRSPSG (71 aa)) are 6 X 8 AA repeats of R-R-S-R-S-X-S-X. Residues Ser163, Ser165, and Ser167 each carry the phosphoserine modification. Ser181, Ser183, Ser189, Ser191, and Ser193 each carry phosphoserine. A compositionally biased stretch (basic residues) spans 187-219 (SRSRSRSRSRSRSLSRPRSSRSKSRSPSPKRSR). One copy of the 5; approximate repeat lies at 208 to 215 (SKSRSPSP). A 6; approximate repeat occupies 216-223 (KRSRSPSG). Phosphoserine occurs at positions 228 and 230.

The protein belongs to the splicing factor SR family. In terms of assembly, found in large molecular weight complexes containing CCNL1 and the p110 isoforms of either CDC2L1 or CDC2L2. Interacts with CCNL2 and CPSF6. Interacts with NXF1. Interacts with YTHDC1. Post-translationally, extensively phosphorylated on serine residues in the RS domain.

The protein localises to the nucleus. It is found in the cytoplasm. Required for pre-mRNA splicing. Represses the splicing of MAPT/Tau exon 10. May function as export adapter involved in mRNA nuclear export such as of histone H2A. Binds mRNA which is thought to be transferred to the NXF1-NXT1 heterodimer for export (TAP/NXF1 pathway); enhances NXF1-NXT1 RNA-binding activity. RNA-binding is semi-sequence specific. In Bos taurus (Bovine), this protein is Serine/arginine-rich splicing factor 7 (SRSF7).